The primary structure comprises 300 residues: 33 kDa chaperonin (300 aa).

2 disulfide bridges follow: Cys247/Cys249 and Cys280/Cys283.

This sequence belongs to the HSP33 family. Post-translationally, under oxidizing conditions two disulfide bonds are formed involving the reactive cysteines. Under reducing conditions zinc is bound to the reactive cysteines and the protein is inactive.

The protein resides in the cytoplasm. Its function is as follows. Redox regulated molecular chaperone. Protects both thermally unfolding and oxidatively damaged proteins from irreversible aggregation. Plays an important role in the bacterial defense system toward oxidative stress. This chain is 33 kDa chaperonin, found in Prochlorococcus marinus (strain MIT 9515).